Here is a 208-residue protein sequence, read N- to C-terminus: TnpB-like protein MJ0012 (208 aa).

4 residues coordinate Zn(2+): Cys-83, Cys-86, Cys-100, and Cys-103.

Belongs to the transposase 35 family.

This is TnpB-like protein MJ0012 from Methanocaldococcus jannaschii (strain ATCC 43067 / DSM 2661 / JAL-1 / JCM 10045 / NBRC 100440) (Methanococcus jannaschii).